The chain runs to 349 residues: Insulin gene enhancer protein ISL-1 (349 aa).

LIM zinc-binding domains lie at 17-70 (CVGC…CKRD) and 79-133 (CAKC…RADH). The homeobox DNA-binding region spans 181–240 (TTRVRTVLNEKQLHTLRTCYAANPRPDALMKEQLVEMTGLSPRVIRVWFQNKRCKDKKRS). Residues 312–349 (VNFSEGGPGSNSTGSEVASMSSQLPDTPNSMVASPIEA) are disordered. The span at 321 to 343 (SNSTGSEVASMSSQLPDTPNSMV) shows a compositional bias: polar residues.

It localises to the nucleus. Acts as a transcriptional regulator. Recognizes and binds to the consensus octamer binding site 5'-ATAATTAA-3' in promoter of target genes. Plays a fundamental role in the gene regulatory network essential for retinal ganglion cell (RGC) differentiation. Binds to insulin gene enhancer sequences. Defines subclasses of motoneurons that segregate into columns in the spinal cord and select distinct axon pathways. Acts in conjunction with LHX1, LHX3 and ISL2. Binds to insulin gene enhancer sequences. Essential for heart development. The chain is Insulin gene enhancer protein ISL-1 (ISL1) from Gallus gallus (Chicken).